The following is a 436-amino-acid chain: Trigger factor (436 aa).

In terms of domain architecture, PPIase FKBP-type spans 161-246; it reads DDQLNIDFVG…VNSVSEPKLP (86 aa).

The protein belongs to the FKBP-type PPIase family. Tig subfamily.

It localises to the cytoplasm. The catalysed reaction is [protein]-peptidylproline (omega=180) = [protein]-peptidylproline (omega=0). Involved in protein export. Acts as a chaperone by maintaining the newly synthesized protein in an open conformation. Functions as a peptidyl-prolyl cis-trans isomerase. This Pseudomonas fluorescens (strain ATCC BAA-477 / NRRL B-23932 / Pf-5) protein is Trigger factor.